Consider the following 478-residue polypeptide: ATP-dependent RNA helicase DDX19A (478 aa).

An N-acetylalanine modification is found at Ala-2. The segment at 2–299 (ATDSWALAVD…DPNVIKLKRE (298 aa)) is N-terminal lobe. A Glycyl lysine isopeptide (Lys-Gly) (interchain with G-Cter in SUMO1); alternate cross-link involves residue Lys-26. Lys-26 participates in a covalent cross-link: Glycyl lysine isopeptide (Lys-Gly) (interchain with G-Cter in SUMO2); alternate. The residue at position 42 (Thr-42) is a Phosphothreonine. Residues 54 to 67 (DRAAQSLLNKLIRS) form an N-terminal helix region. The Q motif motif lies at 91 to 119 (KSFEELRLKPQLLQGVYAMGFNRPSKIQE). ATP contacts are provided by residues Gln-118 and 137–144 (SQSGTGKT). Residues 124-294 (MMLAEPPQNL…QKVVPDPNVI (171 aa)) enclose the Helicase ATP-binding domain. The DEAD box motif lies at 241-244 (DEAD). The segment at 300–478 (EETLDTIKQY…DLDEIEKIAN (179 aa)) is C-terminal lobe. The region spanning 305–473 (TIKQYYVLCS…RLDTDDLDEI (169 aa)) is the Helicase C-terminal domain. ATP contacts are provided by Arg-428 and Arg-431.

This sequence belongs to the DEAD box helicase family. DDX19/DBP5 subfamily.

The protein localises to the cytoplasm. It is found in the nucleus. The protein resides in the nucleoplasm. The catalysed reaction is ATP + H2O = ADP + phosphate + H(+). Its function is as follows. ATP-dependent RNA helicase involved in mRNA export from the nucleus. Rather than unwinding RNA duplexes, DDX19 functions as a remodeler of ribonucleoprotein particles, whereby proteins bound to nuclear mRNA are dissociated and replaced by cytoplasmic mRNA binding proteins. The polypeptide is ATP-dependent RNA helicase DDX19A (DDX19A) (Homo sapiens (Human)).